A 217-amino-acid chain; its full sequence is Small ribosomal subunit protein uS3 (217 aa).

Residues 38–106 (VRKYIETALK…RVHINIIEIK (69 aa)) enclose the KH type-2 domain.

Belongs to the universal ribosomal protein uS3 family. As to quaternary structure, part of the 30S ribosomal subunit. Forms a tight complex with proteins S10 and S14.

In terms of biological role, binds the lower part of the 30S subunit head. Binds mRNA in the 70S ribosome, positioning it for translation. The protein is Small ribosomal subunit protein uS3 of Lysinibacillus sphaericus (strain C3-41).